The chain runs to 666 residues: Amyloid beta A4 precursor protein-binding family B member 1-interacting protein (666 aa).

A Phosphoserine modification is found at S55. Residues 122-155 (SQYEDDLPPPPADPVLDLPLPPPPPEPLSQEEEE) form a disordered region. Residues 129–148 (PPPPADPVLDLPLPPPPPEP) are compositionally biased toward pro residues. One can recognise a Ras-associating domain in the interval 176-263 (KKLVVKVHMN…KILFLEKEEK (88 aa)). One can recognise a PH domain in the interval 310-419 (VPELEGALYL…WVMGIRIAKY (110 aa)). Residues 448 to 666 (AAAPAQPSTG…ALQKKRGNVS (219 aa)) are disordered. Positions 453–478 (QPSTGPKTGTTQPNGQIPQATHSVSA) are enriched in polar residues. A compositionally biased stretch (basic and acidic residues) spans 483–504 (AQRHAETSKDKKPALGNHHDPA). S526 is modified (phosphoserine). A Phosphothreonine modification is found at T528. The residue at position 531 (S531) is a Phosphoserine. 2 stretches are compositionally biased toward pro residues: residues 547 to 589 (PAPP…PPPS) and 598 to 631 (LPPP…PVPP).

It belongs to the MRL family. In terms of assembly, interacts, through the N-terminal Pro-rich region, with the WW domain of APBB1. Interacts with RAP1A, PFN1, TLN1, VASP, VCL and ENAH. As to expression, widely expressed with high expression in thymus, spleen, lymph node, bone marrow and peripheral leukocytes.

It localises to the cell membrane. The protein resides in the cell projection. The protein localises to the lamellipodium. It is found in the cell junction. Its subcellular location is the focal adhesion. It localises to the cytoplasm. The protein resides in the cytoskeleton. Its function is as follows. Appears to function in the signal transduction from Ras activation to actin cytoskeletal remodeling. Suppresses insulin-induced promoter activities through AP1 and SRE. Mediates Rap1-induced adhesion. The chain is Amyloid beta A4 precursor protein-binding family B member 1-interacting protein (APBB1IP) from Homo sapiens (Human).